The primary structure comprises 300 residues: Solute carrier family 25 member 35 (300 aa).

Solcar repeat units lie at residues 1-90, 100-193, and 203-294; these read MDFL…AEAG, HSPA…TKDL, and QSWK…LRSL. A run of 6 helical transmembrane segments spans residues 38–58, 59–79, 91–119, 169–190, 205–225, and 277–300; these read TYQRHYRNVFHAFITIGKVDG, LAALQKGLAPALLYQFLMNGI, GYLHTAEGTHSPARSAAAGAMAGVMGAYL, ALGGLPRVIVGSSTQLCTFSST, WKLALVAAMMSGIAVVLAMAP, and LGPHTILSLFFWDQLRSLYYTDTK.

It belongs to the mitochondrial carrier (TC 2.A.29) family.

It localises to the mitochondrion inner membrane. The enzyme catalyses a dicarboxylate(in) + sulfate(out) = a dicarboxylate(out) + sulfate(in). Its function is as follows. Putative antiporter that exchanges dicarboxylates and sulfur oxoanions across the inner membrane of mitochondria. This is Solute carrier family 25 member 35 (SLC25A35) from Homo sapiens (Human).